The primary structure comprises 270 residues: Tryptophan synthase alpha chain (270 aa).

Residues Glu-50 and Asp-61 each act as proton acceptor in the active site.

The protein belongs to the TrpA family. As to quaternary structure, tetramer of two alpha and two beta chains.

It catalyses the reaction (1S,2R)-1-C-(indol-3-yl)glycerol 3-phosphate + L-serine = D-glyceraldehyde 3-phosphate + L-tryptophan + H2O. It participates in amino-acid biosynthesis; L-tryptophan biosynthesis; L-tryptophan from chorismate: step 5/5. Functionally, the alpha subunit is responsible for the aldol cleavage of indoleglycerol phosphate to indole and glyceraldehyde 3-phosphate. The sequence is that of Tryptophan synthase alpha chain from Chlorobium luteolum (strain DSM 273 / BCRC 81028 / 2530) (Pelodictyon luteolum).